A 207-amino-acid chain; its full sequence is uncharacterized protein (207 aa).

S-adenosyl-L-methionine contacts are provided by G51 and D72.

The protein belongs to the methyltransferase superfamily. YrrT family.

Functionally, could be a S-adenosyl-L-methionine-dependent methyltransferase. This is an uncharacterized protein from Staphylococcus carnosus (strain TM300).